A 73-amino-acid chain; its full sequence is Large ribosomal subunit protein bL31 (73 aa).

The protein belongs to the bacterial ribosomal protein bL31 family. Type A subfamily. Part of the 50S ribosomal subunit.

Functionally, binds the 23S rRNA. The chain is Large ribosomal subunit protein bL31 from Bartonella bacilliformis (strain ATCC 35685 / KC583 / Herrer 020/F12,63).